The sequence spans 373 residues: Dual-specificity RNA methyltransferase RlmN (373 aa).

E94 acts as the Proton acceptor in catalysis. The Radical SAM core domain occupies 100 to 339 (EDDRATLCVS…VTIRKTRGDD (240 aa)). Residues C107 and C344 are joined by a disulfide bond. 3 residues coordinate [4Fe-4S] cluster: C114, C118, and C121. S-adenosyl-L-methionine-binding positions include 168 to 169 (GE), S200, 222 to 224 (SLH), and N301. The active-site S-methylcysteine intermediate is the C344.

It belongs to the radical SAM superfamily. RlmN family. [4Fe-4S] cluster serves as cofactor.

It is found in the cytoplasm. The enzyme catalyses adenosine(2503) in 23S rRNA + 2 reduced [2Fe-2S]-[ferredoxin] + 2 S-adenosyl-L-methionine = 2-methyladenosine(2503) in 23S rRNA + 5'-deoxyadenosine + L-methionine + 2 oxidized [2Fe-2S]-[ferredoxin] + S-adenosyl-L-homocysteine. It catalyses the reaction adenosine(37) in tRNA + 2 reduced [2Fe-2S]-[ferredoxin] + 2 S-adenosyl-L-methionine = 2-methyladenosine(37) in tRNA + 5'-deoxyadenosine + L-methionine + 2 oxidized [2Fe-2S]-[ferredoxin] + S-adenosyl-L-homocysteine. Functionally, specifically methylates position 2 of adenine 2503 in 23S rRNA and position 2 of adenine 37 in tRNAs. m2A2503 modification seems to play a crucial role in the proofreading step occurring at the peptidyl transferase center and thus would serve to optimize ribosomal fidelity. The chain is Dual-specificity RNA methyltransferase RlmN from Vibrio cholerae serotype O1 (strain M66-2).